The following is a 130-amino-acid chain: MAATQYYGTGRRKTSTARVFAKVGTGNITVNKLPLDEYFGRETSRMVVRQPLELVEMTEKLDINVTVKGGGNTGQAGAIRHGITRALMELDESLRPSLRAAGFVTRDARKVERKKVGLRKARRKPQFSKR.

This sequence belongs to the universal ribosomal protein uS9 family.

This chain is Small ribosomal subunit protein uS9, found in Shewanella piezotolerans (strain WP3 / JCM 13877).